The primary structure comprises 473 residues: Glutamate--tRNA ligase 2 (473 aa).

The short motif at 11–21 is the 'HIGH' region element; it reads PSPTGYLHIGG. Residues 113 to 133 show a composition bias toward basic and acidic residues; the sequence is KARAEGRPPRYDGRWRDRDPS. The interval 113–136 is disordered; sequence KARAEGRPPRYDGRWRDRDPSEAP. Residues 240–244 carry the 'KMSKS' region motif; that stretch reads KLSKR. Position 243 (K243) interacts with ATP.

Belongs to the class-I aminoacyl-tRNA synthetase family. Glutamate--tRNA ligase type 1 subfamily. Monomer.

It is found in the cytoplasm. It catalyses the reaction tRNA(Glu) + L-glutamate + ATP = L-glutamyl-tRNA(Glu) + AMP + diphosphate. In terms of biological role, catalyzes the attachment of glutamate to tRNA(Glu) in a two-step reaction: glutamate is first activated by ATP to form Glu-AMP and then transferred to the acceptor end of tRNA(Glu). This chain is Glutamate--tRNA ligase 2, found in Brucella canis (strain ATCC 23365 / NCTC 10854 / RM-666).